An 81-amino-acid polypeptide reads, in one-letter code: Dermaseptin-B7 (81 aa).

Positions 1 to 22 (MASLKKSLFLVLFLGLVSLSIC) are cleaved as a signal peptide. The propeptide occupies 23–44 (EEEKRENEDEEEQEDDEQSEMK). The tract at residues 24–48 (EEKRENEDEEEQEDDEQSEMKRGLW) is disordered. A compositionally biased stretch (acidic residues) spans 30-40 (EDEEEQEDDEQ). Valine 78 carries the post-translational modification Valine amide. Residues 80–81 (EQ) constitute a propeptide that is removed on maturation.

The protein belongs to the frog skin active peptide (FSAP) family. Dermaseptin subfamily. Expressed by the skin glands.

The protein resides in the secreted. In terms of biological role, has antimicrobial activity. The sequence is that of Dermaseptin-B7 (DRG1) from Phyllomedusa bicolor (Two-colored leaf frog).